The chain runs to 449 residues: MVIVAVLAAGRGTRMKSSLPKVLHPLGGRSLVGWVLHQVQSLQPQRQFVIIGYGGDAVRAALADQPQLEFVEQRQQLGTGHAVQQLLPYLKDYEGHLLVLNGDVPLLRGQTLAHLIEVHQNHNNAATILTAQIPNPQGYGRVICDSQNMLKQIIEDRDCTTAQKQNCRINAGVYCFHWPQLAAVLPHLQSNNDQQEYYLTDAVNALSPVMAVDVEDYEEILGVNDRVQLAAAYQVLQNRIKKAWMQAGVTLIDPASITIEDTVELAPDVVIEPQTHLRGQTRIGSGSIIGPGTLIENSVIGERVTARYAVITDSEIGEDTQVGPFAHIRQQSVVADHCRIGNFVELKKARLGSDTKASHLSYLGDATLGDRVNIGAGTITANYDGVRKHPTHIGSGTKTGANSVLVAPVTLGNNVTVAAGSTVTADVPDNALVIARCRQVVKPNWEPEA.

The interval methionine 1 to arginine 226 is pyrophosphorylase. Residues leucine 7–glycine 10, lysine 21, glutamine 73, and glycine 78–threonine 79 contribute to the UDP-N-acetyl-alpha-D-glucosamine site. Aspartate 103 provides a ligand contact to Mg(2+). UDP-N-acetyl-alpha-D-glucosamine-binding residues include glycine 140, glutamate 155, asparagine 170, and asparagine 224. Mg(2+) is bound at residue asparagine 224. The interval valine 227–alanine 247 is linker. The segment at glycine 248–alanine 449 is N-acetyltransferase. UDP-N-acetyl-alpha-D-glucosamine is bound by residues arginine 329 and lysine 347. The active-site Proton acceptor is the histidine 359. UDP-N-acetyl-alpha-D-glucosamine contacts are provided by tyrosine 362 and asparagine 373. Acetyl-CoA-binding positions include alanine 376, asparagine 382–tyrosine 383, alanine 419, and arginine 436.

It in the N-terminal section; belongs to the N-acetylglucosamine-1-phosphate uridyltransferase family. The protein in the C-terminal section; belongs to the transferase hexapeptide repeat family. Homotrimer. The cofactor is Mg(2+).

The protein resides in the cytoplasm. It carries out the reaction alpha-D-glucosamine 1-phosphate + acetyl-CoA = N-acetyl-alpha-D-glucosamine 1-phosphate + CoA + H(+). It catalyses the reaction N-acetyl-alpha-D-glucosamine 1-phosphate + UTP + H(+) = UDP-N-acetyl-alpha-D-glucosamine + diphosphate. Its pathway is nucleotide-sugar biosynthesis; UDP-N-acetyl-alpha-D-glucosamine biosynthesis; N-acetyl-alpha-D-glucosamine 1-phosphate from alpha-D-glucosamine 6-phosphate (route II): step 2/2. The protein operates within nucleotide-sugar biosynthesis; UDP-N-acetyl-alpha-D-glucosamine biosynthesis; UDP-N-acetyl-alpha-D-glucosamine from N-acetyl-alpha-D-glucosamine 1-phosphate: step 1/1. It functions in the pathway bacterial outer membrane biogenesis; LPS lipid A biosynthesis. Catalyzes the last two sequential reactions in the de novo biosynthetic pathway for UDP-N-acetylglucosamine (UDP-GlcNAc). The C-terminal domain catalyzes the transfer of acetyl group from acetyl coenzyme A to glucosamine-1-phosphate (GlcN-1-P) to produce N-acetylglucosamine-1-phosphate (GlcNAc-1-P), which is converted into UDP-GlcNAc by the transfer of uridine 5-monophosphate (from uridine 5-triphosphate), a reaction catalyzed by the N-terminal domain. The protein is Bifunctional protein GlmU of Thermosynechococcus vestitus (strain NIES-2133 / IAM M-273 / BP-1).